Consider the following 934-residue polypeptide: Serine/threonine-protein kinase PknD (934 aa).

The 293-residue stretch at 4-296 (YELIRLIGKG…ELRQALQPYL (293 aa)) folds into the Protein kinase domain. Residues 10–18 (IGKGGMGEV) and K33 each bind ATP. Residue D138 is the Proton acceptor of the active site.

The protein belongs to the protein kinase superfamily. Ser/Thr protein kinase family. Post-translationally, autophosphorylated on serine and threonine residues.

It carries out the reaction L-seryl-[protein] + ATP = O-phospho-L-seryl-[protein] + ADP + H(+). The enzyme catalyses L-threonyl-[protein] + ATP = O-phospho-L-threonyl-[protein] + ADP + H(+). Together with the serine/threonine kinase Pkn1, may play a role in the specific interactions with host proteins during intracellular growth. The protein is Serine/threonine-protein kinase PknD of Chlamydia trachomatis serovar A (strain ATCC VR-571B / DSM 19440 / HAR-13).